Reading from the N-terminus, the 507-residue chain is Cobyric acid synthase (507 aa).

Positions 251-448 (DIDIAVVHLP…LHGLFDSDAF (198 aa)) constitute a GATase cobBQ-type domain. Catalysis depends on cysteine 332, which acts as the Nucleophile. Histidine 440 is a catalytic residue.

The protein belongs to the CobB/CobQ family. CobQ subfamily.

Its pathway is cofactor biosynthesis; adenosylcobalamin biosynthesis. Functionally, catalyzes amidations at positions B, D, E, and G on adenosylcobyrinic A,C-diamide. NH(2) groups are provided by glutamine, and one molecule of ATP is hydrogenolyzed for each amidation. In Klebsiella pneumoniae (strain 342), this protein is Cobyric acid synthase.